The primary structure comprises 256 residues: Ribosomal RNA small subunit methyltransferase A (256 aa).

Residues N12, L14, G39, E60, D85, and N103 each contribute to the S-adenosyl-L-methionine site.

Belongs to the class I-like SAM-binding methyltransferase superfamily. rRNA adenine N(6)-methyltransferase family. RsmA subfamily.

It is found in the cytoplasm. The catalysed reaction is adenosine(1518)/adenosine(1519) in 16S rRNA + 4 S-adenosyl-L-methionine = N(6)-dimethyladenosine(1518)/N(6)-dimethyladenosine(1519) in 16S rRNA + 4 S-adenosyl-L-homocysteine + 4 H(+). Functionally, specifically dimethylates two adjacent adenosines (A1518 and A1519) in the loop of a conserved hairpin near the 3'-end of 16S rRNA in the 30S particle. May play a critical role in biogenesis of 30S subunits. This is Ribosomal RNA small subunit methyltransferase A from Legionella pneumophila (strain Lens).